The sequence spans 425 residues: Protein UL117 (425 aa).

The disordered stretch occupies residues 59–83; sequence PTTTSSSLAPPRDDERRPTPPLRPP.

Belongs to the herpesviridae U84 family.

The protein localises to the host nucleus. Functionally, plays a role in the inhibition of host DNA replication in the infected cell. Targets the mini-chromosome maintenance (MCM) complex and blocks the accumulation of MCM proteins and their loading onto host chromatin. The protein is Protein UL117 (UL117) of Homo sapiens (Human).